We begin with the raw amino-acid sequence, 501 residues long: Bifunctional purine biosynthesis protein PurH (501 aa).

In terms of domain architecture, MGS-like spans 1 to 144 (MKKRALISVF…KNFKDVVVLS (144 aa)).

The protein belongs to the PurH family.

The enzyme catalyses (6R)-10-formyltetrahydrofolate + 5-amino-1-(5-phospho-beta-D-ribosyl)imidazole-4-carboxamide = 5-formamido-1-(5-phospho-D-ribosyl)imidazole-4-carboxamide + (6S)-5,6,7,8-tetrahydrofolate. It catalyses the reaction IMP + H2O = 5-formamido-1-(5-phospho-D-ribosyl)imidazole-4-carboxamide. It functions in the pathway purine metabolism; IMP biosynthesis via de novo pathway; 5-formamido-1-(5-phospho-D-ribosyl)imidazole-4-carboxamide from 5-amino-1-(5-phospho-D-ribosyl)imidazole-4-carboxamide (10-formyl THF route): step 1/1. It participates in purine metabolism; IMP biosynthesis via de novo pathway; IMP from 5-formamido-1-(5-phospho-D-ribosyl)imidazole-4-carboxamide: step 1/1. This Clostridium perfringens (strain 13 / Type A) protein is Bifunctional purine biosynthesis protein PurH.